The primary structure comprises 506 residues: ATP synthase subunit alpha (506 aa).

171–178 contacts ATP; that stretch reads GDRKTGKT.

Belongs to the ATPase alpha/beta chains family. As to quaternary structure, F-type ATPases have 2 components, CF(1) - the catalytic core - and CF(0) - the membrane proton channel. CF(1) has five subunits: alpha(3), beta(3), gamma(1), delta(1), epsilon(1). CF(0) has three main subunits: a(1), b(2) and c(9-12). The alpha and beta chains form an alternating ring which encloses part of the gamma chain. CF(1) is attached to CF(0) by a central stalk formed by the gamma and epsilon chains, while a peripheral stalk is formed by the delta and b chains.

Its subcellular location is the cell inner membrane. The catalysed reaction is ATP + H2O + 4 H(+)(in) = ADP + phosphate + 5 H(+)(out). Produces ATP from ADP in the presence of a proton gradient across the membrane. The alpha chain is a regulatory subunit. The polypeptide is ATP synthase subunit alpha (Anaplasma phagocytophilum (strain HZ)).